Consider the following 470-residue polypeptide: Nuclear receptor subfamily 0 group B member 1 (470 aa).

A run of 3 repeats spans residues 1–67 (MAGE…YRCC), 68–133 (FCGK…YRCC), and 134–200 (FCGE…YRCC). The interval 1 to 253 (MAGENHQWQG…RPVALKSPQV (253 aa)) is 4 X 67 AA tandem repeats. 3 consecutive short sequence motifs (LXXLL motif) follow at residues 13-17 (LYNML), 80-84 (LYSML), and 146-150 (LYSLL). The stretch at 201 to 253 (FCGEDHPQQGSTLYCVPTSTNQAQAAPEERPRAPWWDTSSGALRPVALKSPQV) is one 4; truncated repeat. The NR LBD domain maps to 205-469 (DHPQQGSTLY…DMMLEMLCTK (265 aa)). Positions 461–466 (MMLEML) match the AF-2 motif motif.

Belongs to the nuclear hormone receptor family. NR0 subfamily. As to quaternary structure, homodimer. Interacts with NR5A1, NR5A2, NR0B2 and with COPS2. Interacts with ESRRB; represses ESRRB activity at the GATA6 promoter.

The protein localises to the nucleus. It is found in the cytoplasm. Functionally, nuclear receptor that lacks a DNA-binding domain and acts as a corepressor that inhibits the transcriptional activity of other nuclear receptors through heterodimeric interactions. Component of a cascade required for the development of the hypothalamic-pituitary-adrenal-gonadal axis. May also have a role in the development of the embryo and in the maintenance of embryonic stem cell pluripotency. In Homo sapiens (Human), this protein is Nuclear receptor subfamily 0 group B member 1 (NR0B1).